The chain runs to 194 residues: Mu-like prophage FluMu protein gp37 (194 aa).

It to phage Mu protein gp37.

The protein is Mu-like prophage FluMu protein gp37 of Haemophilus influenzae (strain ATCC 51907 / DSM 11121 / KW20 / Rd).